The sequence spans 340 residues: Dof zinc finger protein DOF2.2 (340 aa).

Residues 12 to 33 (PPINWPQSANPNNHPHHHQLQE) form a disordered region. A Dof-type zinc finger spans residues 94-148 (LKCPRCDSANTKFCYFNNYNLTQPRHFCKACRRYWTRGGALRNVPVGGGCRRNKK). The Zn(2+) site is built by C96, C99, C121, and C124. Disordered regions lie at residues 138–180 (PVGG…TSNV) and 301–340 (GNIS…QHLM). Low complexity predominate over residues 151–165 (SGNSKSSSSSQNKQS). 2 stretches are compositionally biased toward polar residues: residues 166–180 (TSMV…TSNV) and 309–331 (GLTS…GSSS).

The protein localises to the nucleus. In terms of biological role, transcription factor that binds specifically to a 5'-AA[AG]G-3' consensus core sequence. This Arabidopsis thaliana (Mouse-ear cress) protein is Dof zinc finger protein DOF2.2 (DOF2.2).